The sequence spans 474 residues: Replication-associated protein (474 aa).

The short motif at 248–255 (GKRFQEDR) is the Nuclear localization signal element. The segment at 455–474 (AFAPGFSLTSEPEPKRRRFF) is disordered.

It localises to the host nucleus. Functionally, plays an essential for the replication of viral DNA. Presumably cleaves viral genomic dsRNA replicative form to initiate rolling circle replication. The chain is Replication-associated protein from Avon-Heathcote Estuary associated kieseladnavirus (AHEaBV).